A 1557-amino-acid polypeptide reads, in one-letter code: MREGRWVTVTESEFEHERRGLEAIRQKLPDGDPWRAWSNFTFTANTGHVREVDLLVVAPGGLCMVELKDWHGSVTSENGTWVQTTPGGRRRTHGNPLHLVNRKAKELAGLLAQPGAKRVWVAEAVCFTDNGLRVRLPAHDQNGVYTVDELVDMLKQAPSDERRRVTAIGSREVAAALKNIGIRKSDAQYKVGPYELERKSFDSGPTWADYLARHSDLPEAARVRIYLSERGSDASLRQSVENAARREAAVLGRFKHPGAVQLKQYFPSGHAAGPALIFDYHPHTQKLDEYLVQYGEKLDILGRMALVRQLAETVRSAHASRIHHRALAARSVLVVPRSRGGKGRAVGEEAAWLTPQLQISDWQIATQRSGDSSQGQGMTRFAPTALSAMHLADDADAYLAPELTALNPDPVYLDVYGLGVLTYLLVTGKAPAASQAELLARLEAGEGLRPSSLVDGLSEDVDELVQAATAYRPGQRLSSVDEFLELLEVVEDSLTAPAAALDGPAEDETGASADKDPLEVVAGDLLAGRWEVRRRLGTGSTSRAFLVRDLEAETRRTRPLAVLKVALSDSRGEILVREAEAMRRLRPHSGIIRLAEPEPLHIGGRTVLALEYVGDERDDDGPGAEGATRPRRREETVARQLREHGRLPVDQLEAYGDYLFGAVDFLEGEGIWHRDIKPDNIAVRIRPNRTRELVLIDFSLAGYPAKNTDAGTDGYLDPFVDVITRGSYDSHAERYAVAVTLHQMASGELPKWGDGSVLPRMTDPKEWPYPTIAAEAFDPAVRDGLVAFFQKALHRDAGKRFPELKPMRDAWRKVFLDASQTVPSSHRTRPAAPADGAAPAEGAAAGIADAEPETAEQQRDRLAAEVTRDTPLTVSGLTPAAQSFLYGLGITTVGELLDYSRRKLVNAPGLGAKTRNEVQQRQREWGERLREAPVSPLTPKGRAEAKEELEQLTAAESALVGQLATGESAGALSARTLRSVSLDTLATVLVPAVNNNGSNRNKAEMVRLLLRLPDEHGVLPGIGVWPKQKDVADALGLSHGRIPQMLKDERKRWKAEPAVQALRDEIIELLASMGRVASAVEIADALAVRRGTHLAGREQRRAMALAAVRAVVEVEQLVPQEVEFQHQPNRKATDESLGAGLLALDVREDDAPDTPTAPGLLDYATRLGKTADRLARLDTLPTAATVLAELGALTVPPGAVDWDERRMVELAAAASVNAAATPRLEIYPRDLSLVRALRLTQAGLVRWIPGVPEGRQPGLTGEDVHERVRARFPELVVPDGRGGTAHELPTAGPLTKALRDAGFELSLSMREDTGTLRYLPTRVDEASSYLTTGAWRQSTRTGTVTRYADDPQLAGAVRAEERLLASAHRDGYRVLTVRQQLVRDAVRELGAERLGGQAVSVTELFLEALHGQVTPGTKPTWETLLKADAAEPGSKGAVRFAEYARTAWGSVEPRIAELLGDGGGGAGPVLLTEAGVFARYDAMGVLDRLASAARRGGRGLWLLVPQSDPSREPRLGQVAVPYQAGLGEWIQLPDTWVGNRHRGSGEVVASGVEGDAK.

The region spanning 12–130 is the NERD domain; it reads SEFEHERRGL…VAEAVCFTDN (119 aa). 2 consecutive Protein kinase domains span residues 195 to 490 and 530 to 816; these read ELER…LEVV and WEVR…KVFL. Residues 536–544 and Lys-564 each bind ATP; that span reads LGTGSTSRA. Disordered regions lie at residues 615-634 and 821-861; these read DERDDDGPGAEGATRPRRRE and TVPS…QRDR. Low complexity predominate over residues 830–849; that stretch reads PAAPADGAAPAEGAAAGIAD.

This sequence belongs to the protein kinase superfamily. Ser/Thr protein kinase family.

In terms of biological role, BREX systems (bacteriophage exclusion) provide immunity against bacteriophage. Part of a type 2 BREX system. Previously called the phage growth limitation (Pgl) system, it confers protection against bacteriophage phiC31. The bacteria allows one cycle of phage infection, but subsequent cycles are impaired, protecting the original bacterial colony. The system undergoes high rates (10(-3) to 10(-4)) of phase reversion, i.e. loss and regain of phiC31 resistance. When the pglW-pglX-pglY-pglZ genes are transformed into a susceptible S.lividans (strain 1326) they confer resistance to infection by phage phiC31 and phiBT1; all 4 genes are necessary. The proteins has kinase domains and might bind DNA. Autophosphorylates when synthesized in vitro, cannot be expressed in E.coli. The polypeptide is Probable kinase PglW (Streptomyces coelicolor (strain ATCC BAA-471 / A3(2) / M145)).